The primary structure comprises 39 residues: Fuctinin-3 (39 aa).

The segment at 1 to 39 is disordered; sequence KELNSNHDGADETSEKEQQEAIEHIDEVQNEIDRLNETA.

This sequence to human SET/PHAPII protein. As to quaternary structure, oligomer.

It is found in the cytoplasm. Has a role in the physiological regulation of fucosylation processes. This chain is Fuctinin-3, found in Rattus norvegicus (Rat).